The following is a 100-amino-acid chain: Tetrahydromethanopterin S-methyltransferase subunit B (100 aa).

A helical transmembrane segment spans residues 80–100 (KLTNIVYGFILGLIILFALLL).

It belongs to the MtrB family. As to quaternary structure, the complex is composed of 8 subunits; MtrA, MtrB, MtrC, MtrD, MtrE, MtrF, MtrG and MtrH.

It is found in the cell membrane. It catalyses the reaction 5-methyl-5,6,7,8-tetrahydromethanopterin + coenzyme M + 2 Na(+)(in) = 5,6,7,8-tetrahydromethanopterin + methyl-coenzyme M + 2 Na(+)(out). Its pathway is one-carbon metabolism; methanogenesis from CO(2); methyl-coenzyme M from 5,10-methylene-5,6,7,8-tetrahydromethanopterin: step 2/2. In terms of biological role, part of a complex that catalyzes the formation of methyl-coenzyme M and tetrahydromethanopterin from coenzyme M and methyl-tetrahydromethanopterin. This is an energy-conserving, sodium-ion translocating step. In Methanothermobacter marburgensis (strain ATCC BAA-927 / DSM 2133 / JCM 14651 / NBRC 100331 / OCM 82 / Marburg) (Methanobacterium thermoautotrophicum), this protein is Tetrahydromethanopterin S-methyltransferase subunit B.